The sequence spans 472 residues: Succinate-semialdehyde dehydrogenase [NADP(+)] (472 aa).

NADP(+)-binding positions include 134–135, 158–161, and 210–211; these read WN, KHAS, and GS. The active-site Proton acceptor is the glutamate 232. Leucine 233 contributes to the NADP(+) binding site. Cysteine 266 serves as the catalytic Nucleophile. Residue glutamate 363 coordinates NADP(+).

Belongs to the aldehyde dehydrogenase family.

It carries out the reaction succinate semialdehyde + NADP(+) + H2O = succinate + NADPH + 2 H(+). Catalyzes the NADP(+)-dependent oxidation of succinate semialdehyde to succinate. It is believed to be the main source of succinate semialdehyde dehydrogenase activity in Mycobacterium. The sequence is that of Succinate-semialdehyde dehydrogenase [NADP(+)] (gabD1) from Mycobacterium avium (strain 104).